The chain runs to 816 residues: Pentatricopeptide repeat-containing protein At5g12100, mitochondrial (816 aa).

The N-terminal 39 residues, 1–39 (MVTRLRLVSRSSRYATVKFTDSVSACSCRRLFSASTDPE), are a transit peptide targeting the mitochondrion. The disordered stretch occupies residues 34–57 (ASTDPEPESQPEQAPPTNPVTGDE). PPR repeat units lie at residues 108–142 (HDFS…GIYP), 143–177 (SSDS…DFRP), 178–212 (SKFM…RIYP), 213–247 (SVFI…RLLP), 248–282 (SLIT…HIEP), 283–317 (SLIT…GFVP), 318–352 (DAFT…GVKM), 353–387 (NAYT…GLVP), 388–422 (NEVI…GMKP), 423–457 (DHLA…GVSP), 458–492 (SVET…GTMP), 493–527 (NVVS…GVSP), 528–562 (KVRI…GIEL), 563–597 (NLVT…GLKP), 598–632 (DVFT…GIKP), 633–662 (TLKT…MSLK), 664–698 (DLLV…SIGL), 699–733 (DKTT…EMEP), 734–768 (EADT…GFLL), and 769–803 (DVCI…MLGD).

It belongs to the PPR family. P subfamily.

It is found in the mitochondrion. This chain is Pentatricopeptide repeat-containing protein At5g12100, mitochondrial, found in Arabidopsis thaliana (Mouse-ear cress).